A 128-amino-acid chain; its full sequence is Otoraplin (128 aa).

The N-terminal stretch at 1–17 is a signal peptide; that stretch reads MARILLLFLPGLVAVCA. 2 cysteine pairs are disulfide-bonded: C32/C37 and C55/C127. The 72-residue stretch at 39-110 folds into the SH3 domain; it reads YTISLASAQE…PRNLVKEQRV (72 aa).

The protein belongs to the MIA/OTOR family. Highly expressed in cochlea.

The protein resides in the secreted. This Homo sapiens (Human) protein is Otoraplin (OTOR).